The sequence spans 189 residues: Small ribosomal subunit protein uS5 (189 aa).

Residues 20 to 83 enclose the S5 DRBM domain; sequence FVDRLVHINR…ESAKRALIRV (64 aa).

Belongs to the universal ribosomal protein uS5 family. As to quaternary structure, part of the 30S ribosomal subunit. Contacts proteins S4 and S8.

With S4 and S12 plays an important role in translational accuracy. Its function is as follows. Located at the back of the 30S subunit body where it stabilizes the conformation of the head with respect to the body. The sequence is that of Small ribosomal subunit protein uS5 from Beijerinckia indica subsp. indica (strain ATCC 9039 / DSM 1715 / NCIMB 8712).